Consider the following 457-residue polypeptide: Putative methyltransferase MT1451 (457 aa).

Residues 276–282 (CAGPGGK), Glu301, Asp325, and Asp341 contribute to the S-adenosyl-L-methionine site. Cys394 acts as the Nucleophile in catalysis.

This sequence belongs to the class I-like SAM-binding methyltransferase superfamily. RsmB/NOP family.

May act as RNA methyltransferase. In Mycobacterium tuberculosis (strain CDC 1551 / Oshkosh), this protein is Putative methyltransferase MT1451.